Consider the following 254-residue polypeptide: MNFVQENNHVLYLWAGTVGPEIEQEVNAIKTIPNVQVNVENVERLQLAEYGKSQFDVILAQVATGNSTLVTLLVKLLKPKGKCVFRDDSAASIEQARSNLLLAGFINIVASDSNVYVAEKPDYEVGSKSKLSFAKKSNVAAVWKLDDNEEEERIDDEELLDEDDKAKPTEESLRVCGTTGKRKACKDCSCGLAEELDAEAKGKALTDTSAAKSSCGSCYLGDAFRCATCPYLGMPAFKPGEKIVLTDTQMQADI.

The N-terminal SAM-like domain stretch occupies residues 4–133 (VQENNHVLYL…EVGSKSKLSF (130 aa)). A linker region spans residues 134 to 165 (AKKSNVAAVWKLDDNEEEERIDDEELLDEDDK). Residues Cys-176, Cys-185, Cys-188, and Cys-190 each contribute to the [2Fe-2S] cluster site. Residues 176-190 (CGTTGKRKACKDCSC) form a fe-S binding site A region. Positions 215, 218, 226, and 229 each coordinate [4Fe-4S] cluster. 2 consecutive short sequence motifs (cx2C motif) follow at residues 215–218 (CGSC) and 226–229 (CATC). The tract at residues 215-229 (CGSCYLGDAFRCATC) is fe-S binding site B.

Belongs to the anamorsin family. Monomer. Requires [2Fe-2S] cluster as cofactor. The cofactor is [4Fe-4S] cluster.

It is found in the cytoplasm. Its subcellular location is the mitochondrion intermembrane space. In terms of biological role, component of the cytosolic iron-sulfur (Fe-S) protein assembly (CIA) machinery. Required for the maturation of extramitochondrial Fe-S proteins. Part of an electron transfer chain functioning in an early step of cytosolic Fe-S biogenesis, facilitating the de novo assembly of a [4Fe-4S] cluster on the cytosolic Fe-S scaffold complex. Electrons are transferred from NADPH via a FAD- and FMN-containing diflavin oxidoreductase. Together with the diflavin oxidoreductase, also required for the assembly of the diferric tyrosyl radical cofactor of ribonucleotide reductase (RNR), probably by providing electrons for reduction during radical cofactor maturation in the catalytic small subunit. This Anopheles gambiae (African malaria mosquito) protein is Anamorsin homolog.